A 159-amino-acid chain; its full sequence is Putative pre-16S rRNA nuclease (159 aa).

It belongs to the YqgF nuclease family.

The protein localises to the cytoplasm. In terms of biological role, could be a nuclease involved in processing of the 5'-end of pre-16S rRNA. The chain is Putative pre-16S rRNA nuclease from Agrobacterium fabrum (strain C58 / ATCC 33970) (Agrobacterium tumefaciens (strain C58)).